An 881-amino-acid polypeptide reads, in one-letter code: Lon protease (881 aa).

The span at 1–24 (MAKNTDIEHDAHEPAGHGDVRESA) shows a compositional bias: basic and acidic residues. The disordered stretch occupies residues 1–77 (MAKNTDIEHD…RAGEAEKGVP (77 aa)). Residues 49–59 (QTDTESAQGAA) show a composition bias toward polar residues. The segment covering 65 to 77 (EVQRAGEAEKGVP) has biased composition (basic and acidic residues). Residues 94-287 (VHLIPLTGRP…EVFVYIKKEK (194 aa)) enclose the Lon N-terminal domain. 440–447 (GPPGVGKT) provides a ligand contact to ATP. A Lon proteolytic domain is found at 679 to 861 (ANKVGTAVGL…EEVLSLAFPK (183 aa)). Active-site residues include Ser-767 and Lys-810.

It belongs to the peptidase S16 family. In terms of assembly, homohexamer. Organized in a ring with a central cavity.

It localises to the cytoplasm. It carries out the reaction Hydrolysis of proteins in presence of ATP.. Functionally, ATP-dependent serine protease that mediates the selective degradation of mutant and abnormal proteins as well as certain short-lived regulatory proteins. Required for cellular homeostasis and for survival from DNA damage and developmental changes induced by stress. Degrades polypeptides processively to yield small peptide fragments that are 5 to 10 amino acids long. Binds to DNA in a double-stranded, site-specific manner. The chain is Lon protease from Treponema pallidum (strain Nichols).